The following is a 44-amino-acid chain: Phycoerythrin alpha-1 chain (44 aa).

The tract at residues 1 to 44 (AMDKSAKAPQITIFDHRGCSRAPKSETGGTATKDDQMMVKVSQV) is disordered. Lys4 is subject to 5-hydroxylysine. The 15,16-dihydrobiliverdin site is built by Cys19 and Arg21. Residues 24–26 (KSE) are 15,16-dihydrobiliverdin chromophore. Lys40 lines the 15,16-dihydrobiliverdin pocket.

This sequence belongs to the phycoerythrin family. In terms of assembly, heterotetramer of 2 different alpha chains and 2 identical beta chains. The subunit composition could comprise of any combination of 2 out of 4 different alpha units with an invariant beta unit. Contains one covalently linked 15,16-dihydrobiliverdin chromophore.

It is found in the plastid. The protein resides in the chloroplast thylakoid membrane. In terms of biological role, light-harvesting photosynthetic tetrapyrrole chromophore-protein from the phycobiliprotein complex. This chain is Phycoerythrin alpha-1 chain (cpeA1), found in Rhodomonas sp. (strain CS 24) (Chroomonas sp. (strain CS24)).